We begin with the raw amino-acid sequence, 389 residues long: Urea transporter 1 (389 aa).

Transmembrane regions (helical) follow at residues 53–73 (PVVL…VFVN), 91–110 (WWAL…ALLL), 116–136 (LIAS…MAVF), 143–163 (FWWL…FSSA), and 173–193 (LPVF…ATGH). A glycan (N-linked (GlcNAc...) asparagine) is linked at asparagine 211. Helical transmembrane passes span 242–262 (GGIF…HAAI), 281–301 (IYFG…GGMF), 310–330 (LLAL…ANFM), and 333–353 (VGLP…LIMT).

This sequence belongs to the urea transporter family. Homotrimer; each subunit contains a pore through which urea permeates. Identified in a complex with STOM. Detected in erythrocytes (at protein level). Expressed in spleen erythroblasts and tumoral kidney.

It localises to the cell membrane. Its subcellular location is the basolateral cell membrane. The enzyme catalyses urea(in) = urea(out). Inhibited by phloretin and para-chloromercuribenzene sulfonate. Functionally, mediates the transport of urea driven by a concentration gradient across the cell membrane of erythrocytes. Also mediates the transport of urea across the cell membrane of the renal inner medullary collecting duct which is critical to the urinary concentrating mechanism. Facilitates water transport in erythrocytes. In Homo sapiens (Human), this protein is Urea transporter 1 (SLC14A1).